The chain runs to 377 residues: Protein-glutamate methylesterase/protein-glutamine glutaminase 1 (377 aa).

The Response regulatory domain maps to lysine 4–leucine 121. Aspartate 55 is subject to 4-aspartylphosphate. The tract at residues arginine 138–arginine 170 is disordered. Residues proline 146–serine 157 show a composition bias toward low complexity. Residues serine 184–alanine 377 form the CheB-type methylesterase domain. Active-site residues include serine 196, histidine 223, and aspartate 319.

This sequence belongs to the CheB family. In terms of processing, phosphorylated by CheA. Phosphorylation of the N-terminal regulatory domain activates the methylesterase activity.

Its subcellular location is the cytoplasm. It catalyses the reaction [protein]-L-glutamate 5-O-methyl ester + H2O = L-glutamyl-[protein] + methanol + H(+). The enzyme catalyses L-glutaminyl-[protein] + H2O = L-glutamyl-[protein] + NH4(+). In terms of biological role, involved in chemotaxis. Part of a chemotaxis signal transduction system that modulates chemotaxis in response to various stimuli. Catalyzes the demethylation of specific methylglutamate residues introduced into the chemoreceptors (methyl-accepting chemotaxis proteins or MCP) by CheR. Also mediates the irreversible deamidation of specific glutamine residues to glutamic acid. The chain is Protein-glutamate methylesterase/protein-glutamine glutaminase 1 from Vibrio cholerae serotype O1 (strain ATCC 39315 / El Tor Inaba N16961).